The chain runs to 263 residues: HTH-type transcriptional repressor NanR (263 aa).

The tract at residues Met1 to Arg25 is disordered. Residues Lys30–Pro98 enclose the HTH gntR-type domain. Residues Glu58–Ala77 constitute a DNA-binding region (H-T-H motif).

Belongs to the NanR family.

Functionally, transcriptional repressor that controls expression of the genes required for the catabolism of sialic acids. This is HTH-type transcriptional repressor NanR from Salmonella schwarzengrund (strain CVM19633).